Reading from the N-terminus, the 185-residue chain is Ribosome-recycling factor (185 aa).

It belongs to the RRF family.

Its subcellular location is the cytoplasm. Responsible for the release of ribosomes from messenger RNA at the termination of protein biosynthesis. May increase the efficiency of translation by recycling ribosomes from one round of translation to another. This chain is Ribosome-recycling factor, found in Streptococcus agalactiae serotype V (strain ATCC BAA-611 / 2603 V/R).